The following is a 470-amino-acid chain: Calcium/manganese antiporter SLC30A10 (470 aa).

The Cytoplasmic portion of the chain corresponds to 1-10 (MGRYSGKTCR). Residues 11-31 (LLFMLVLTAAFFVAELVSGYL) form a helical membrane-spanning segment. Over 32–34 (GNS) the chain is Extracellular. A helical membrane pass occupies residues 35-55 (IALLSDSFNMLSDLISLCVGL). Over 56 to 81 (GSGYIARRGPRGSSATYGYVRAEVVG) the chain is Cytoplasmic. A helical membrane pass occupies residues 82 to 102 (ALSNAVFLTALCFTIFVEAVL). The Extracellular segment spans residues 103–113 (RLARPERIDDP). Residues 114-134 (ELVLIVGALGLAVNVVGLLIF) traverse the membrane as a helical segment. Over 135-233 (QDCGACFSRC…KSEALNIRGV (99 aa)) the chain is Cytoplasmic. The disordered stretch occupies residues 146–223 (RGRRTRPSQQ…EPEETTKKEK (78 aa)). Over residues 171 to 184 (AATATAPGSGTAVT) the composition is skewed to low complexity. The helical transmembrane segment at 234–254 (LLHVMGDALGSVVVVITAIIF) threads the bilayer. Over 255–270 (YVQPLRREDPCNWQCY) the chain is Extracellular. Residues 271-291 (IDPSLTVVMVIIILSSAFPLI) form a helical membrane-spanning segment. Over 292–470 (KETAVILLQM…RQHYENSTHF (179 aa)) the chain is Cytoplasmic. Residues 300–470 (QMVPKGVNME…RQHYENSTHF (171 aa)) form a required for plasma membrane localization region. The disordered stretch occupies residues 451-470 (QGQTLSKTQERQHYENSTHF). Residues 458 to 470 (TQERQHYENSTHF) show a composition bias toward basic and acidic residues.

The protein belongs to the cation diffusion facilitator (CDF) transporter (TC 2.A.4) family. SLC30A subfamily. As to quaternary structure, forms homodimers. Forms heterodimers and high-molecular weight oligomers with SLC30A3, SLC30A2 and SLC30A4; heterodimerization is mediated by covalent-bound tyrosine residues, occurs probably in a tissue-specific manner and could mediate the intracellular zinc transport activity into early endosomes and recycling endosomes. In terms of tissue distribution, specifically expressed in fetal liver and fetal brain.

It is found in the cell membrane. The protein resides in the golgi apparatus membrane. Its subcellular location is the recycling endosome membrane. The protein localises to the early endosome membrane. It catalyses the reaction Mn(2+)(out) + Ca(2+)(in) = Mn(2+)(in) + Ca(2+)(out). The catalysed reaction is Zn(2+)(in) = Zn(2+)(out). Its function is as follows. Calcium:manganese antiporter of the plasma membrane mediating the efflux of intracellular manganese coupled to an active extracellular calcium exchange. Required for intracellular manganese homeostasis, an essential cation for the function of several enzymes, including some crucially important for the metabolism of neurotransmitters and other neuronal metabolic pathways. Manganese can also be cytotoxic and induce oxidative stress, mitochondrial dysfunction and apoptosis. Could also have an intracellular zinc ion transporter activity, directly regulating intracellular zinc ion homeostasis and more indirectly various signaling pathway and biological processes. The protein is Calcium/manganese antiporter SLC30A10 of Mus musculus (Mouse).